The chain runs to 769 residues: ATP-dependent RNA helicase DBP7 (769 aa).

Disordered stretches follow at residues 38–107 (AVKR…DRKS) and 127–150 (VAST…NAPL). Residues 55–68 (NSNNPQNPNKINVP) are compositionally biased toward low complexity. The Q motif motif lies at 155–184 (DTFTSLGLSPSLATHLLTKLNLKTPTAIQK). The 202-residue stretch at 188–389 (TQLLKEECDA…EISLKEAIHI (202 aa)) folds into the Helicase ATP-binding domain. Residue 201–208 (AQTGSGKT) coordinates ATP. Positions 325–328 (DEGD) match the DEAD box motif. Disordered regions lie at residues 391–411 (ADPA…EFSA), 471–490 (SEEL…NVHG), and 705–769 (VPGL…FNIA). The Helicase C-terminal domain maps to 430-622 (TLTALLKRTF…EVNEILKRGF (193 aa)). Positions 472–481 (EELPDADDEN) are enriched in acidic residues. Composition is skewed to basic and acidic residues over residues 711–739 (GNED…REDS) and 746–760 (AEAR…KEHM).

Belongs to the DEAD box helicase family. DDX31/DBP7 subfamily.

It localises to the nucleus. Its subcellular location is the nucleolus. It carries out the reaction ATP + H2O = ADP + phosphate + H(+). ATP-binding RNA helicase involved in the biogenesis of 60S ribosomal subunits and is required for the normal formation of 25S and 5.8S rRNAs. In Coccidioides immitis (strain RS) (Valley fever fungus), this protein is ATP-dependent RNA helicase DBP7 (DBP7).